The chain runs to 326 residues: Nicotianamine synthase 2 (326 aa).

Belongs to the nicotianamine synthase (NAS)-like family. Expressed in roots.

It catalyses the reaction 3 S-adenosyl-L-methionine = nicotianamine + 3 S-methyl-5'-thioadenosine + 3 H(+). Functionally, synthesizes nicotianamine, a polyamine that is the first intermediate in the synthesis of the phytosiderophores of the mugineic acid type found in gramineae which serve as a sensor for the physiological iron status within the plant, and/or might be involved in the transport of iron. The protein is Nicotianamine synthase 2 (NAS2) of Oryza sativa subsp. indica (Rice).